Here is a 425-residue protein sequence, read N- to C-terminus: Enolase (425 aa).

(2R)-2-phosphoglycerate is bound at residue Q162. The Proton donor role is filled by E204. Mg(2+)-binding residues include D241, E282, and D309. K334, R363, S364, and K385 together coordinate (2R)-2-phosphoglycerate. Catalysis depends on K334, which acts as the Proton acceptor.

This sequence belongs to the enolase family. Mg(2+) serves as cofactor.

The protein resides in the cytoplasm. It localises to the secreted. It is found in the cell surface. The catalysed reaction is (2R)-2-phosphoglycerate = phosphoenolpyruvate + H2O. It functions in the pathway carbohydrate degradation; glycolysis; pyruvate from D-glyceraldehyde 3-phosphate: step 4/5. In terms of biological role, catalyzes the reversible conversion of 2-phosphoglycerate (2-PG) into phosphoenolpyruvate (PEP). It is essential for the degradation of carbohydrates via glycolysis. This Corynebacterium aurimucosum (strain ATCC 700975 / DSM 44827 / CIP 107346 / CN-1) (Corynebacterium nigricans) protein is Enolase.